We begin with the raw amino-acid sequence, 58 residues long: Teratocyte protein CftICK-III (58 aa).

Positions 1 to 24 (MQKFMRLFFLGLFFILFMTTQIKA) are cleaved as a signal peptide. Intrachain disulfides connect C27–C42, C34–C47, and C41–C55.

As to expression, abundantly expressed by teratocytes, which are extra-embryonic cells released by parasitoid wasps into their hosts during larval eclosion.

The protein localises to the secreted. In terms of biological role, this endoparasitoid wasp peptide has immununosuppressive and insecticidal activities. Suppress cellular immunity which is detectable as a reduction of hemocyte encapsulation in the host. In vivo, ingestion of this peptide (probably at excessive doses) increases larval mortality and reduces leaf consumption in both lepidopteran species D.saccharalis and S.frugiperda, which are permissive and non-permissive hosts for C.flavipes, respectively. The polypeptide is Teratocyte protein CftICK-III (Cotesia flavipes (Parasitic wasp)).